Reading from the N-terminus, the 452-residue chain is Bifunctional protein GlmU (452 aa).

Residues 1–233 (MTDRPFAALI…AWEVAGVNSR (233 aa)) are pyrophosphorylase. Residues 11–14 (LAAG), Lys25, Gln76, 81–82 (GT), 104–106 (YGD), Gly144, Glu159, Asn174, and Asn231 contribute to the UDP-N-acetyl-alpha-D-glucosamine site. Asp106 is a Mg(2+) binding site. Residue Asn231 coordinates Mg(2+). The tract at residues 234–254 (AELAAVEAEWQRRRRLAAMAD) is linker. The segment at 255 to 452 (GATLIAPETV…AMKIKKAARK (198 aa)) is N-acetyltransferase. 2 residues coordinate UDP-N-acetyl-alpha-D-glucosamine: Arg320 and Lys338. His350 serves as the catalytic Proton acceptor. UDP-N-acetyl-alpha-D-glucosamine is bound by residues Tyr353 and Asn364. Residues Ala367, 373–374 (NY), Ser392, Ala410, and Arg427 each bind acetyl-CoA.

The protein in the N-terminal section; belongs to the N-acetylglucosamine-1-phosphate uridyltransferase family. In the C-terminal section; belongs to the transferase hexapeptide repeat family. In terms of assembly, homotrimer. It depends on Mg(2+) as a cofactor.

Its subcellular location is the cytoplasm. It catalyses the reaction alpha-D-glucosamine 1-phosphate + acetyl-CoA = N-acetyl-alpha-D-glucosamine 1-phosphate + CoA + H(+). The enzyme catalyses N-acetyl-alpha-D-glucosamine 1-phosphate + UTP + H(+) = UDP-N-acetyl-alpha-D-glucosamine + diphosphate. It participates in nucleotide-sugar biosynthesis; UDP-N-acetyl-alpha-D-glucosamine biosynthesis; N-acetyl-alpha-D-glucosamine 1-phosphate from alpha-D-glucosamine 6-phosphate (route II): step 2/2. The protein operates within nucleotide-sugar biosynthesis; UDP-N-acetyl-alpha-D-glucosamine biosynthesis; UDP-N-acetyl-alpha-D-glucosamine from N-acetyl-alpha-D-glucosamine 1-phosphate: step 1/1. It functions in the pathway bacterial outer membrane biogenesis; LPS lipid A biosynthesis. In terms of biological role, catalyzes the last two sequential reactions in the de novo biosynthetic pathway for UDP-N-acetylglucosamine (UDP-GlcNAc). The C-terminal domain catalyzes the transfer of acetyl group from acetyl coenzyme A to glucosamine-1-phosphate (GlcN-1-P) to produce N-acetylglucosamine-1-phosphate (GlcNAc-1-P), which is converted into UDP-GlcNAc by the transfer of uridine 5-monophosphate (from uridine 5-triphosphate), a reaction catalyzed by the N-terminal domain. This is Bifunctional protein GlmU from Rhizorhabdus wittichii (strain DSM 6014 / CCUG 31198 / JCM 15750 / NBRC 105917 / EY 4224 / RW1) (Sphingomonas wittichii).